Consider the following 64-residue polypeptide: Phi-buthitoxin-Hj1a (64 aa).

An N-terminal signal peptide occupies residues 1-18 (MNSFVVVLLLFIAILCNA). Intrachain disulfides connect Cys29/Cys43, Cys36/Cys49, and Cys42/Cys58.

This sequence belongs to the scorpion calcin-like family. As to expression, expressed by the venom gland.

The protein resides in the secreted. Functionally, may increase intracellular calcium release through the activation of nuclear inositol 1,4,5-trisphosphate receptors (ITPR) of cardiomyocytes, thereby causing an increase in the contraction frequency of these cells. This Hottentotta judaicus (Black scorpion) protein is Phi-buthitoxin-Hj1a.